The following is a 452-amino-acid chain: Phosphoglucosamine mutase (452 aa).

The Phosphoserine intermediate role is filled by serine 104. Positions 104, 245, 247, and 249 each coordinate Mg(2+). Serine 104 bears the Phosphoserine mark.

The protein belongs to the phosphohexose mutase family. Requires Mg(2+) as cofactor. In terms of processing, activated by phosphorylation.

It carries out the reaction alpha-D-glucosamine 1-phosphate = D-glucosamine 6-phosphate. Functionally, catalyzes the conversion of glucosamine-6-phosphate to glucosamine-1-phosphate. The polypeptide is Phosphoglucosamine mutase (Gluconacetobacter diazotrophicus (strain ATCC 49037 / DSM 5601 / CCUG 37298 / CIP 103539 / LMG 7603 / PAl5)).